Consider the following 61-residue polypeptide: Small ribosomal subunit protein uS14 (61 aa).

Zn(2+)-binding residues include C24, C27, C40, and C43.

This sequence belongs to the universal ribosomal protein uS14 family. Zinc-binding uS14 subfamily. In terms of assembly, part of the 30S ribosomal subunit. Contacts proteins S3 and S10. Zn(2+) serves as cofactor.

Functionally, binds 16S rRNA, required for the assembly of 30S particles and may also be responsible for determining the conformation of the 16S rRNA at the A site. This is Small ribosomal subunit protein uS14 from Leptospira biflexa serovar Patoc (strain Patoc 1 / Ames).